We begin with the raw amino-acid sequence, 590 residues long: DNA primase (590 aa).

The segment at 37-61 (CPFHTEKTPSFIVNPAGAHYHCFGC) adopts a CHC2-type zinc-finger fold. The Toprim domain occupies 253 to 333 (KKVILVEGQA…QMSVFVCKLP (81 aa)). Positions 259, 304, and 306 each coordinate Mg(2+).

The protein belongs to the DnaG primase family. In terms of assembly, monomer. Interacts with DnaB. Zn(2+) serves as cofactor. It depends on Mg(2+) as a cofactor.

It carries out the reaction ssDNA + n NTP = ssDNA/pppN(pN)n-1 hybrid + (n-1) diphosphate.. Its function is as follows. RNA polymerase that catalyzes the synthesis of short RNA molecules used as primers for DNA polymerase during DNA replication. This is DNA primase from Chlamydia pneumoniae (Chlamydophila pneumoniae).